Reading from the N-terminus, the 457-residue chain is Mesentericin Y105 secretion protein MesE (457 aa).

A helical membrane pass occupies residues 22 to 42 (TLIIVPIFLLVVFIVLFSLFA).

The protein belongs to the membrane fusion protein (MFP) (TC 8.A.1) family.

It is found in the membrane. Functionally, involved in the secretion of mesentericin Y105. This Leuconostoc mesenteroides protein is Mesentericin Y105 secretion protein MesE (mesE).